Consider the following 478-residue polypeptide: Probable serine carboxypeptidase CPVL (478 aa).

The signal sequence occupies residues 1-22; it reads MVRAQWKVIILLILLMVIPSDG. 2 N-linked (GlcNAc...) asparagine glycosylation sites follow: asparagine 83 and asparagine 134. Serine 206 is an active-site residue. N-linked (GlcNAc...) asparagine glycosylation is found at asparagine 309 and asparagine 350. Catalysis depends on residues aspartate 390 and histidine 450.

It belongs to the peptidase S10 family.

May be involved in the digestion of phagocytosed particles in the lysosome, participation in an inflammatory protease cascade, and trimming of peptides for antigen presentation. The protein is Probable serine carboxypeptidase CPVL (CPVL) of Rattus norvegicus (Rat).